The primary structure comprises 360 residues: Peptide chain release factor 1 (360 aa).

Gln237 is modified (N5-methylglutamine).

Belongs to the prokaryotic/mitochondrial release factor family. Post-translationally, methylated by PrmC. Methylation increases the termination efficiency of RF1.

It localises to the cytoplasm. In terms of biological role, peptide chain release factor 1 directs the termination of translation in response to the peptide chain termination codons UAG and UAA. In Saccharophagus degradans (strain 2-40 / ATCC 43961 / DSM 17024), this protein is Peptide chain release factor 1.